The sequence spans 103 residues: N(4)-acetylcytidine amidohydrolase (103 aa).

Residues Ile6 to Phe100 form the ASCH domain. The Proton acceptor role is filled by Lys21. Catalysis depends on Thr24, which acts as the Nucleophile. Catalysis depends on Glu74, which acts as the Proton donor.

The protein belongs to the N(4)-acetylcytidine amidohydrolase family.

It carries out the reaction N(4)-acetylcytidine + H2O = cytidine + acetate + H(+). The enzyme catalyses N(4)-acetyl-2'-deoxycytidine + H2O = 2'-deoxycytidine + acetate + H(+). The catalysed reaction is N(4)-acetylcytosine + H2O = cytosine + acetate + H(+). Its function is as follows. Catalyzes the hydrolysis of N(4)-acetylcytidine (ac4C). The polypeptide is N(4)-acetylcytidine amidohydrolase (Klebsiella pneumoniae subsp. pneumoniae (strain ATCC 700721 / MGH 78578)).